Reading from the N-terminus, the 232-residue chain is Protein G1-like3 (232 aa).

2 disordered regions span residues 20-77 and 189-232; these read AGLL…YEAQ and ARAR…GAAC. Residues 38 to 53 are compositionally biased toward gly residues; the sequence is AGGGGGGGGDGAGGSS. An ALOG domain is found at 73–200; it reads RYEAQKRRDW…ARGVSYEKKK (128 aa). Residues 198–202 carry the Nuclear localization signal motif; the sequence is KKKRK. Residues 216 to 232 show a composition bias toward pro residues; sequence PHPPPPPPPPPSAGAAC.

Belongs to the plant homeotic and developmental regulators ALOG protein family.

The protein resides in the nucleus. Its function is as follows. Probable transcription regulator that acts as a developmental regulator by promoting cell growth in response to light. The polypeptide is Protein G1-like3 (Oryza sativa subsp. indica (Rice)).